The primary structure comprises 388 residues: Acetate kinase (388 aa).

A Mg(2+)-binding site is contributed by Asn-8. Lys-15 provides a ligand contact to ATP. Residue Arg-88 participates in substrate binding. Asp-144 acts as the Proton donor/acceptor in catalysis. ATP is bound by residues 202–206 (HLGNG), 276–278 (DMR), and 321–325 (GVGEN). Glu-375 contacts Mg(2+).

This sequence belongs to the acetokinase family. In terms of assembly, homodimer. The cofactor is Mg(2+). Mn(2+) serves as cofactor.

It localises to the cytoplasm. It catalyses the reaction acetate + ATP = acetyl phosphate + ADP. The protein operates within metabolic intermediate biosynthesis; acetyl-CoA biosynthesis; acetyl-CoA from acetate: step 1/2. Catalyzes the formation of acetyl phosphate from acetate and ATP. Can also catalyze the reverse reaction. This Mycoplasmoides gallisepticum (strain R(low / passage 15 / clone 2)) (Mycoplasma gallisepticum) protein is Acetate kinase.